Reading from the N-terminus, the 213-residue chain is Phosphoribosyl-dephospho-CoA transferase (213 aa).

Active-site residues include Asp135 and Asp137.

It belongs to the MdcG family.

The catalysed reaction is apo-[malonate decarboxylase ACP] + 2'-(5''-triphospho-alpha-D-ribosyl)-3'-dephospho-CoA = holo-[malonate decarboxylase ACP] + diphosphate. Functionally, transfers 2'-(5-triphosphoribosyl)-3'-dephosphocoenzyme-A to the apo-[acyl-carrier-protein] of the malonate decarboxylase to yield holo-[acyl-carrier-protein]. This Xanthomonas euvesicatoria pv. vesicatoria (strain 85-10) (Xanthomonas campestris pv. vesicatoria) protein is Phosphoribosyl-dephospho-CoA transferase.